The following is a 420-amino-acid chain: Serine hydroxymethyltransferase (420 aa).

(6S)-5,6,7,8-tetrahydrofolate contacts are provided by residues leucine 118 and 122 to 124; that span reads GHL. Position 227 is an N6-(pyridoxal phosphate)lysine (lysine 227).

It belongs to the SHMT family. In terms of assembly, homodimer. Requires pyridoxal 5'-phosphate as cofactor.

The protein resides in the cytoplasm. It catalyses the reaction (6R)-5,10-methylene-5,6,7,8-tetrahydrofolate + glycine + H2O = (6S)-5,6,7,8-tetrahydrofolate + L-serine. Its pathway is one-carbon metabolism; tetrahydrofolate interconversion. The protein operates within amino-acid biosynthesis; glycine biosynthesis; glycine from L-serine: step 1/1. In terms of biological role, catalyzes the reversible interconversion of serine and glycine with tetrahydrofolate (THF) serving as the one-carbon carrier. This reaction serves as the major source of one-carbon groups required for the biosynthesis of purines, thymidylate, methionine, and other important biomolecules. Also exhibits THF-independent aldolase activity toward beta-hydroxyamino acids, producing glycine and aldehydes, via a retro-aldol mechanism. The sequence is that of Serine hydroxymethyltransferase from Persephonella marina (strain DSM 14350 / EX-H1).